The chain runs to 419 residues: Acetyl transferase GW6a (419 aa).

An N-acetyltransferase domain is found at 12 to 210; it reads VRVREFDVEK…GHPVHAHRLP (199 aa). Positions 44 to 68 are disordered; the sequence is VHDHADDGDGAAAKEKKKTKTKTKK. A compositionally biased stretch (basic residues) spans 58 to 68; it reads EKKKTKTKTKK.

The protein belongs to the acetyltransferase family. In terms of assembly, interacts (via C-terminus) with HDR3 (via N-terminus). Post-translationally, ubiquitinated at Lys-63 by HDR3. Polyubiquitination of GW6A delays its degradation by the 26S proteasome and enhances GW6A histone acetyltransferase activity. In terms of tissue distribution, expressed in roots, leaf blades, leaf sheaths, shoot apical meristem and young panicles.

Its subcellular location is the nucleus. Functionally, possesses intrinsic histone acetyltransferase activity and acts as a positive regulator of grain weight, hull size, yield, and plant biomass. Regulates postitively grain weight and yield by enlarging spikelet hulls via increasing cell number and accelerating grain filling. In vitro, catalyzes the acetylation of histone H4 at Lys-6 (H4K5ac), Lys-13 (H4K12ac) and Lys-17 (H4K16ac). Involved in the regulation of plastochron (the time interval between leaf initiation event). The polypeptide is Acetyl transferase GW6a (Oryza sativa subsp. japonica (Rice)).